Reading from the N-terminus, the 174-residue chain is MTQPLFLIGPRGCGKTTVGMALADSLNRRFVDTDQWLQSQLNMTVAEIVEREEWAGFRARETAALEAVTAPSTVIATGGGIILTEFNRHFMQNNGIVVYLCAPVSVLVNRLQAAPEEDLRPTLTGKPLSEEVQEVLEERDALYREVAHIIIDATNEPSQVISEIRSALAQTINC.

ATP is bound at residue 12 to 17 (GCGKTT). Mg(2+) is bound by residues Thr-16 and Asp-32. Positions 34, 58, and 79 each coordinate substrate. An LID domain region spans residues 112 to 126 (QAAPEEDLRPTLTGK). Position 120 (Arg-120) interacts with ATP. Arg-139 contributes to the substrate binding site.

This sequence belongs to the shikimate kinase family. AroL subfamily. As to quaternary structure, monomer. The cofactor is Mg(2+).

The protein resides in the cytoplasm. The catalysed reaction is shikimate + ATP = 3-phosphoshikimate + ADP + H(+). It functions in the pathway metabolic intermediate biosynthesis; chorismate biosynthesis; chorismate from D-erythrose 4-phosphate and phosphoenolpyruvate: step 5/7. Catalyzes the specific phosphorylation of the 3-hydroxyl group of shikimic acid using ATP as a cosubstrate. The sequence is that of Shikimate kinase 2 from Shigella boydii serotype 4 (strain Sb227).